The sequence spans 270 residues: Gap junction beta-3 protein (270 aa).

Residues 1 to 20 (MDWKKLQDLLSGVNQYSTAF) lie on the Cytoplasmic side of the membrane. Residues 21–40 (GRIWLSVVFVFRVLVYVVAA) traverse the membrane as a helical segment. At 41–75 (ERVWGDEQKDFDCNTRQPGCTNVCYDNFFPISNIR) the chain is on the extracellular side. A helical transmembrane segment spans residues 76–98 (LWALQLIFVTCPSMLVILHVAYR). Topologically, residues 99-126 (EERERKHRQKHGEQCAKLYSHPGKKHGG) are cytoplasmic. Residues 127-149 (LWWTYLFSLIFKLIIELVFLYVL) form a helical membrane-spanning segment. Topologically, residues 150–188 (HTLWHGFTMPRLVQCASIVPCPNTVDCYIARPTEKKVFT) are extracellular. The chain crosses the membrane as a helical span at residues 189-211 (YFMVGASAVCIILTICEICYLIF). The Cytoplasmic segment spans residues 212 to 270 (HRIMRGISKGKSTKSISSPKSSSRASTCRCHHKLLESGDPEADPASEKLQASAPSLTPI). The segment at 246–270 (LESGDPEADPASEKLQASAPSLTPI) is disordered.

This sequence belongs to the connexin family. Beta-type (group I) subfamily. As to quaternary structure, a connexon is composed of a hexamer of connexins. Interacts with CNST.

Its subcellular location is the cell membrane. It is found in the cell junction. The protein resides in the gap junction. Functionally, one gap junction consists of a cluster of closely packed pairs of transmembrane channels, the connexons, through which materials of low MW diffuse from one cell to a neighboring cell. This Mus musculus (Mouse) protein is Gap junction beta-3 protein (Gjb3).